Consider the following 449-residue polypeptide: uncharacterized protein (449 aa).

Disordered stretches follow at residues 1–58 (MVKR…SLSS) and 71–125 (EALE…VVEL). Residues 30–46 (KQRDELREKQKRKREDS) show a composition bias toward basic and acidic residues. Acidic residues predominate over residues 103–124 (SDDDDDDNEEEDDNGFEDQVVE).

This sequence belongs to the bystin family.

This is an uncharacterized protein from Caenorhabditis elegans.